Reading from the N-terminus, the 234-residue chain is Elongation factor Tu (234 aa).

The tr-type G domain maps to 1–125 (KNMITGAAQM…EVDAFIPTPE (125 aa)). GTP is bound at residue 47–50 (NKQD).

This sequence belongs to the TRAFAC class translation factor GTPase superfamily. Classic translation factor GTPase family. EF-Tu/EF-1A subfamily. Monomer.

The protein resides in the cytoplasm. The enzyme catalyses GTP + H2O = GDP + phosphate + H(+). Its function is as follows. GTP hydrolase that promotes the GTP-dependent binding of aminoacyl-tRNA to the A-site of ribosomes during protein biosynthesis. This chain is Elongation factor Tu (tufA), found in Prochlorothrix hollandica.